Consider the following 305-residue polypeptide: Polyamine aminopropyltransferase 2 (305 aa).

Residues 7-242 form the PABS domain; it reads WRFVAEWTSE…GLWGFVAASD (236 aa). Gln36 is an S-methyl-5'-thioadenosine binding site. The spermidine site is built by His67 and Glu91. S-methyl-5'-thioadenosine contacts are provided by residues Asp111 and 143-144; that span reads DG. Asp161 acts as the Proton acceptor in catalysis. S-methyl-5'-thioadenosine is bound at residue Pro170.

The protein belongs to the spermidine/spermine synthase family. In terms of assembly, homodimer or homotetramer.

It is found in the cytoplasm. The enzyme catalyses S-adenosyl 3-(methylsulfanyl)propylamine + propane-1,3-diamine = norspermidine + S-methyl-5'-thioadenosine + H(+). Its function is as follows. Involved in the biosynthesis of polyamines which are thought to support the growth of thermophilic microorganisms under high-temperature conditions. It seems that long-chain and branched-chain of polyamines effectively stabilize DNA and RNA, respectively. Catalyzes the irreversible transfer of a propylamine group from the amino donor S-adenosylmethioninamine (decarboxy-AdoMet) to 1,3-diaminopropane to yield sym-norspermidine (bis(3-aminopropyl)amine). It can also synthesize thermospermine from spermidine with a very low activity. The chain is Polyamine aminopropyltransferase 2 from Hyperthermus butylicus (strain DSM 5456 / JCM 9403 / PLM1-5).